An 831-amino-acid polypeptide reads, in one-letter code: Protein translocase subunit SecA (831 aa).

Residues glutamine 88, 106 to 110, and aspartate 495 each bind ATP; that span reads GEGKT. The Zn(2+) site is built by cysteine 816, cysteine 818, cysteine 827, and cysteine 828.

The protein belongs to the SecA family. Monomer and homodimer. Part of the essential Sec protein translocation apparatus which comprises SecA, SecYEG and auxiliary proteins SecDF-YajC and YidC. Zn(2+) serves as cofactor.

It localises to the cell membrane. The protein resides in the cytoplasm. The enzyme catalyses ATP + H2O + cellular proteinSide 1 = ADP + phosphate + cellular proteinSide 2.. Part of the Sec protein translocase complex. Interacts with the SecYEG preprotein conducting channel. Has a central role in coupling the hydrolysis of ATP to the transfer of proteins into and across the cell membrane, serving as an ATP-driven molecular motor driving the stepwise translocation of polypeptide chains across the membrane. The sequence is that of Protein translocase subunit SecA from Lawsonia intracellularis (strain PHE/MN1-00).